Here is a 362-residue protein sequence, read N- to C-terminus: Peptide chain release factor 1 (362 aa).

At Q237 the chain carries N5-methylglutamine. Positions 284–295 are enriched in basic and acidic residues; that stretch reads EEEKRQAEETST. Residues 284-304 form a disordered region; the sequence is EEEKRQAEETSTRRNLVASGD.

The protein belongs to the prokaryotic/mitochondrial release factor family. Post-translationally, methylated by PrmC. Methylation increases the termination efficiency of RF1.

Its subcellular location is the cytoplasm. Functionally, peptide chain release factor 1 directs the termination of translation in response to the peptide chain termination codons UAG and UAA. The chain is Peptide chain release factor 1 from Pseudoalteromonas atlantica (strain T6c / ATCC BAA-1087).